A 252-amino-acid chain; its full sequence is Type III pantothenate kinase (252 aa).

6 to 13 (DIGNTNIV) is a binding site for ATP. 107-110 (GADL) contacts substrate. Aspartate 109 functions as the Proton acceptor in the catalytic mechanism. Aspartate 129 provides a ligand contact to K(+). Threonine 132 contributes to the ATP binding site. Residue threonine 184 participates in substrate binding.

It belongs to the type III pantothenate kinase family. Homodimer. The cofactor is NH4(+). K(+) serves as cofactor.

Its subcellular location is the cytoplasm. It carries out the reaction (R)-pantothenate + ATP = (R)-4'-phosphopantothenate + ADP + H(+). Its pathway is cofactor biosynthesis; coenzyme A biosynthesis; CoA from (R)-pantothenate: step 1/5. Catalyzes the phosphorylation of pantothenate (Pan), the first step in CoA biosynthesis. The chain is Type III pantothenate kinase from Bifidobacterium animalis subsp. lactis (strain AD011).